The primary structure comprises 45 residues: Ice-structuring protein SS-8 (45 aa).

The residue at position 1 (methionine 1) is a Blocked amino end (Met). 3 consecutive repeats follow at residues 9-21 (KAAR…ALAA), 22-33 (KTAADAAAKAAA), and 34-45 (KAAAIAAAAASA).

The protein belongs to the type-I AFP family.

Antifreeze proteins lower the blood freezing point. The sequence is that of Ice-structuring protein SS-8 from Myoxocephalus scorpius (Shorthorn sculpin).